Here is a 234-residue protein sequence, read N- to C-terminus: Multicopy suppressor of SEC21 protein 28 (234 aa).

Over 1-47 (MQTPPESTDVKLDTLNEPSAHLIEKNVALPKDIFRSYLSYWIYEIAR) the chain is Cytoplasmic. Residue Thr-3 is modified to Phosphothreonine. A helical transmembrane segment spans residues 48 to 68 (YTPVMILSLVIGVLVLLIIFF). At 69 to 72 (NDNE) the chain is on the extracellular side. A helical membrane pass occupies residues 73-93 (ACVFNSAIFAFTSLVGLLIIL). Topologically, residues 94–234 (SDGNPKLVSR…NIDALLKKTE (141 aa)) are cytoplasmic. Residues 231 to 234 (KKTE) form a COPI binding region.

The protein belongs to the DUP/COS family. In terms of assembly, interacts with MST27. Binds to coatomer proteins of COPI and SEC23/SEC24 of COPII coated vesicles.

The protein localises to the endoplasmic reticulum. The protein resides in the golgi apparatus. Its subcellular location is the cytoplasmic vesicle. It localises to the COPI-coated vesicle membrane. It is found in the COPII-coated vesicle membrane. Functionally, involved in protein trafficking vesicle formation, probably by stabilizing of coatomer at the Golgi membrane and thus allowing the efficient formation of COPI coated vesicles. The chain is Multicopy suppressor of SEC21 protein 28 (MST28) from Saccharomyces cerevisiae (strain ATCC 204508 / S288c) (Baker's yeast).